A 920-amino-acid chain; its full sequence is Probable transport protein MmpL7 (920 aa).

12 helical membrane passes run Leu44–Thr64, Ile210–Leu230, Ala241–Val261, Val271–Leu291, Leu311–Ala331, Leu344–Ala364, Ser389–Met409, Leu761–Met781, Ala790–Trp810, Val822–Ile842, Gly864–Ser884, and Phe888–Val908.

It belongs to the resistance-nodulation-cell division (RND) (TC 2.A.6) family. MmpL subfamily.

The protein localises to the cell membrane. This chain is Probable transport protein MmpL7 (mmpL7), found in Mycobacterium bovis (strain ATCC BAA-935 / AF2122/97).